The following is a 291-amino-acid chain: Phycobilisome 32.1 kDa linker polypeptide, phycocyanin-associated, rod 1 (291 aa).

Residues 2–179 (AITTAASRLG…LYRGYANSDR (178 aa)) form the PBS-linker domain. The CpcD-like domain maps to 236 to 288 (SKLFRVEITAISAPGYPKVRRSNKAVIVPFEQLNQTLQQINRLGGKVASITPA).

The protein belongs to the phycobilisome linker protein family. In terms of assembly, part of 2 PBS rod complexes, the conventional CpcG-PBS rod and a photosystem I-specific CpcL-PBS rod, both of which include ferredoxin--NADP reductase (petH). CpcG-PBS has on average 3 stacked phycocyanin hexamers (PC, CpcA and CpcB). Linker CpcG connects the PC stack to the thylakoid, the hexamers are linked by 1 copy of CpcC1, 1 copy of CpcC2 and the stack is terminated by a single copy of CpcD. The CpcL-PBS has on average 5 stacked phycocyanin hexamers (PC, CpcA and CpcB). Linker CpcL connects the PC stack to the thylakoid, the hexamers are linked by 1 copy of CpcC1, 3 copies of CpcC2 and the stack is terminated by a single copy of CpcD.

Its subcellular location is the cellular thylakoid membrane. Rod linker protein, connecting hexameric phycocyanin (PC, made by cpcA and cpcB) rods in the phycobilisome (PBS). PC is the major phycobiliprotein in PBS rods. Linker polypeptides determine the state of aggregation and the location of the disk-shaped phycobiliprotein units within the phycobilisome and modulate their spectroscopic properties in order to mediate a directed and optimal energy transfer. The protein is Phycobilisome 32.1 kDa linker polypeptide, phycocyanin-associated, rod 1 (cpcC1) of Synechocystis sp. (strain ATCC 27184 / PCC 6803 / Kazusa).